The sequence spans 620 residues: Cilia- and flagella-associated protein 52 (620 aa).

11 WD repeats span residues glycine 62–arginine 106, leucine 109–glycine 150, leucine 156–tryptophan 195, glutamine 288–isoleucine 327, cysteine 330–arginine 369, valine 372–threonine 411, alanine 415–glutamate 454, glutamate 459–methionine 498, leucine 500–glutamate 541, serine 543–valine 582, and glycine 585–serine 620.

It belongs to the CFAP52 family. In terms of assembly, microtubule inner protein component of sperm flagellar doublet microtubules. Interacts with BRCA2. Interacts with the CCT chaperonin complex. Interacts with HSP70. Interacts with AK8. Interacts with CFAP45. Interacts with DNAI1. Interacts with IQDC.

The protein localises to the cytoplasm. It localises to the cytoskeleton. Its subcellular location is the cilium axoneme. The protein resides in the flagellum axoneme. In terms of biological role, microtubule inner protein (MIP) part of the dynein-decorated doublet microtubules (DMTs) in cilia axoneme. Important for proper ciliary and flagellar beating. May act in cooperation with CFAP45 and axonemal dynein subunit DNAH11. May play a role in cell growth and/or survival. The chain is Cilia- and flagella-associated protein 52 from Mus musculus (Mouse).